Reading from the N-terminus, the 423-residue chain is Dihydroorotase (423 aa).

2 residues coordinate Zn(2+): histidine 60 and histidine 62. Substrate-binding positions include 62-64 and asparagine 94; that span reads HFR. Zn(2+)-binding residues include aspartate 152, histidine 179, histidine 232, and aspartate 305. Aspartate 305 is an active-site residue. Residues histidine 309 and 323-324 contribute to the substrate site; that span reads PG.

Belongs to the metallo-dependent hydrolases superfamily. DHOase family. Class I DHOase subfamily. Zn(2+) is required as a cofactor.

The enzyme catalyses (S)-dihydroorotate + H2O = N-carbamoyl-L-aspartate + H(+). The protein operates within pyrimidine metabolism; UMP biosynthesis via de novo pathway; (S)-dihydroorotate from bicarbonate: step 3/3. Its function is as follows. Catalyzes the reversible cyclization of carbamoyl aspartate to dihydroorotate. The chain is Dihydroorotase from Sulfurihydrogenibium sp. (strain YO3AOP1).